Reading from the N-terminus, the 257-residue chain is Acetylglutamate kinase (257 aa).

Substrate is bound by residues 43-44 (GG), Arg65, and Asn157. ATP is bound by residues 180–185 (DVSGIL) and 208–210 (IIT).

It belongs to the acetylglutamate kinase family. ArgB subfamily. In terms of assembly, homodimer.

It is found in the cytoplasm. The enzyme catalyses N-acetyl-L-glutamate + ATP = N-acetyl-L-glutamyl 5-phosphate + ADP. The protein operates within amino-acid biosynthesis; L-arginine biosynthesis; N(2)-acetyl-L-ornithine from L-glutamate: step 2/4. Catalyzes the ATP-dependent phosphorylation of N-acetyl-L-glutamate. The polypeptide is Acetylglutamate kinase (Photorhabdus laumondii subsp. laumondii (strain DSM 15139 / CIP 105565 / TT01) (Photorhabdus luminescens subsp. laumondii)).